A 427-amino-acid chain; its full sequence is MESLTLQPIARVDGAINLPGSKSVSNRALLLAALACGKTVLMNLLDSDDVRHMLNALSALGINYTLSADRTRCDITGNGGALHAPGALELFLGNAGTAMRPLAAALCLGQNEIVLTGEPRMKERPIGHLVDSLRQGGANIDYLEQENYPPLRLRGGFTGGDIEVDGSVSSQFLTALLMTAPLAPEDTIIRVKGELVSKPYIDITLNLMKTFGVEIANHHYQQFVVKGGQKYHSPGRYLVEGDASSASYFLAAGAIKGGTVKVTGIGRKSMQGDIRFADVLEKMGATITWGDDFIACTRGELHAIDMDMNHIPDAAMTIATTALFAKGTTTLRNIYNWRVKETDRLFAMATELRKVGAEVEEGHDYIRITPPAKLQHADIGTYNDHRMAMCFSLVALSDTPVTILDPKCTAKTFPDYFEQLARMSTPA.

3-phosphoshikimate-binding residues include lysine 22, serine 23, and arginine 27. Lysine 22 provides a ligand contact to phosphoenolpyruvate. Phosphoenolpyruvate is bound by residues glycine 96 and arginine 124. 3-phosphoshikimate-binding residues include serine 169, serine 170, glutamine 171, serine 197, aspartate 313, asparagine 336, and lysine 340. Glutamine 171 is a phosphoenolpyruvate binding site. The active-site Proton acceptor is the aspartate 313. Residues arginine 344, arginine 386, and lysine 411 each contribute to the phosphoenolpyruvate site.

The protein belongs to the EPSP synthase family. Monomer.

The protein localises to the cytoplasm. It catalyses the reaction 3-phosphoshikimate + phosphoenolpyruvate = 5-O-(1-carboxyvinyl)-3-phosphoshikimate + phosphate. Its pathway is metabolic intermediate biosynthesis; chorismate biosynthesis; chorismate from D-erythrose 4-phosphate and phosphoenolpyruvate: step 6/7. Catalyzes the transfer of the enolpyruvyl moiety of phosphoenolpyruvate (PEP) to the 5-hydroxyl of shikimate-3-phosphate (S3P) to produce enolpyruvyl shikimate-3-phosphate and inorganic phosphate. The chain is 3-phosphoshikimate 1-carboxyvinyltransferase from Salmonella agona (strain SL483).